The following is a 491-amino-acid chain: Glutamyl-tRNA(Gln) amidotransferase subunit A (491 aa).

Active-site charge relay system residues include K81 and S156. The active-site Acyl-ester intermediate is S180.

The protein belongs to the amidase family. GatA subfamily. In terms of assembly, heterotrimer of A, B and C subunits.

The enzyme catalyses L-glutamyl-tRNA(Gln) + L-glutamine + ATP + H2O = L-glutaminyl-tRNA(Gln) + L-glutamate + ADP + phosphate + H(+). Functionally, allows the formation of correctly charged Gln-tRNA(Gln) through the transamidation of misacylated Glu-tRNA(Gln) in organisms which lack glutaminyl-tRNA synthetase. The reaction takes place in the presence of glutamine and ATP through an activated gamma-phospho-Glu-tRNA(Gln). The chain is Glutamyl-tRNA(Gln) amidotransferase subunit A from Alcanivorax borkumensis (strain ATCC 700651 / DSM 11573 / NCIMB 13689 / SK2).